A 146-amino-acid chain; its full sequence is MAFWQSKTLAQMSATEWESLCDGCGKCCLNKLIDDETEDLYYTNAACLLLDHQTAGCQHYSDRFTHVPQCTVITIDNIHELTWLPDSCAYRRLAAGRELPSWHPLLTGSKEAMHLAGMSIQGKVVDERRVKDIEDHIVLWPLKDVD.

Belongs to the UPF0260 family.

The polypeptide is UPF0260 protein Sbal_1871 (Shewanella baltica (strain OS155 / ATCC BAA-1091)).